Reading from the N-terminus, the 608-residue chain is Actin-related protein 8 (608 aa).

Residues 1–20 (MQRSRASSTSSGRLQASQQV) form a disordered region. 272 to 275 (DIGA) contributes to the ATP binding site.

It belongs to the actin family. ARP8 subfamily. In terms of assembly, component of the chromatin remodeling Ino80 complex. Exists as monomers and dimers, but the dimer is most probably the biologically relevant form required for stable interactions with histones that exploits the twofold symmetry of the nucleosome core.

The protein localises to the nucleus. Plays an important role in the functional organization of mitotic chromosomes. Exhibits low basal ATPase activity, and unable to polymerize. Functionally, proposed core component of the chromatin remodeling INO80 complex which is involved in transcriptional regulation, DNA replication and probably DNA repair. Strongly prefer nucleosomes and H3-H4 tetramers over H2A-H2B dimers, suggesting it may act as a nucleosome recognition module within the complex. This is Actin-related protein 8 from Drosophila pseudoobscura pseudoobscura (Fruit fly).